Consider the following 178-residue polypeptide: Large ribosomal subunit protein uL6 (178 aa).

It belongs to the universal ribosomal protein uL6 family. As to quaternary structure, part of the 50S ribosomal subunit.

Its function is as follows. This protein binds to the 23S rRNA, and is important in its secondary structure. It is located near the subunit interface in the base of the L7/L12 stalk, and near the tRNA binding site of the peptidyltransferase center. In Streptococcus equi subsp. zooepidemicus (strain H70), this protein is Large ribosomal subunit protein uL6.